The following is a 173-amino-acid chain: Phosphopantetheine adenylyltransferase (173 aa).

Substrate is bound at residue Ser9. ATP is bound by residues 9 to 10 (SF) and His17. Residues Lys41, Thr73, and Arg87 each coordinate substrate. ATP contacts are provided by residues 88-90 (GVR), Glu98, and 123-129 (YQYLSSS).

It belongs to the bacterial CoaD family. As to quaternary structure, homohexamer. It depends on Mg(2+) as a cofactor.

Its subcellular location is the cytoplasm. The catalysed reaction is (R)-4'-phosphopantetheine + ATP + H(+) = 3'-dephospho-CoA + diphosphate. Its pathway is cofactor biosynthesis; coenzyme A biosynthesis; CoA from (R)-pantothenate: step 4/5. Its function is as follows. Reversibly transfers an adenylyl group from ATP to 4'-phosphopantetheine, yielding dephospho-CoA (dPCoA) and pyrophosphate. This is Phosphopantetheine adenylyltransferase from Limosilactobacillus fermentum (strain NBRC 3956 / LMG 18251) (Lactobacillus fermentum).